Consider the following 770-residue polypeptide: Integrin beta-2 (770 aa).

An N-terminal signal peptide occupies residues 1-22; sequence MLPQRPQLLLLAGLLSLQSVLS. The residue at position 23 (Gln23) is a Pyrrolidone carboxylic acid. Residues 23 to 701 lie on the Extracellular side of the membrane; the sequence is QECTKYKVST…DMLECVKGPN (679 aa). A PSI domain is found at 24–74; that stretch reads ECTKYKVSTCRDCIESGPSCAWCQKLNFTGQGEPDSTRCDTRAQLLSKGCP. Intrachain disulfides connect Cys25–Cys43, Cys33–Cys447, Cys36–Cys62, Cys46–Cys73, Cys191–Cys198, Cys246–Cys286, Cys386–Cys400, Cys420–Cys445, Cys449–Cys467, Cys459–Cys470, Cys472–Cys481, Cys483–Cys514, Cys497–Cys512, Cys506–Cys517, Cys519–Cys534, Cys536–Cys559, Cys541–Cys557, Cys549–Cys562, Cys564–Cys573, Cys575–Cys598, Cys582–Cys596, Cys590–Cys601, Cys603–Cys612, Cys615–Cys618, Cys622–Cys663, Cys628–Cys647, Cys631–Cys643, and Cys671–Cys696. Residues Asn50 and Asn116 are each glycosylated (N-linked (GlcNAc...) asparagine). A VWFA domain is found at 124–363; sequence GYPIDLYYLM…ELIKSAYNKL (240 aa). Residues Ser136 and Ser138 each coordinate Mg(2+). The Ca(2+) site is built by Ser138, Asp141, Asp142, and Asp173. 4 residues coordinate Ca(2+): Asn229, Asp231, Pro233, and Glu234. Glu234 is a binding site for Mg(2+). Asn254 carries an N-linked (GlcNAc...) asparagine glycan. Residues Asp264 and Glu347 each coordinate Ca(2+). The Cell attachment site signature appears at 397–399; it reads RGD. I-EGF domains are found at residues 449–482, 483–535, 536–574, and 575–613; these read CREA…KNCE, CQTH…QFCE, CDNV…SACQ, and CLKS…PLCI. Asn501 is a glycosylation site (N-linked (GlcNAc...) asparagine). A glycan (N-linked (GlcNAc...) asparagine) is linked at Asn642. A helical membrane pass occupies residues 702 to 724; sequence IAAIVGGTVGGVVLVGILLLAIW. The Cytoplasmic portion of the chain corresponds to 725 to 770; sequence KALTHLSDLREYHRFEKEKLKSQWNNDNPLFKSATTTVMNPKFAES. Phosphoserine occurs at positions 746 and 757. 2 positions are modified to phosphothreonine: Thr759 and Thr761.

It belongs to the integrin beta chain family. Heterodimer of an alpha and a beta subunit. The ITGB2 beta subunit associates with the ITGAL, ITGAM, ITGAX or ITGAD alpha subunits. Found in a complex with CD177 and ITGAM/CD11b. Interacts with FGR. Interacts with COPS5 and RANBP9. Interacts with FLNA (via filamin repeats 4, 9, 12, 17, 19, 21, and 23). Interacts with THBD. In terms of processing, both Ser-746 and Ser-757 become phosphorylated when T-cells are exposed to phorbol esters. Phosphorylation on Thr-759 (but not on Ser-757) allows interaction with 14-3-3 proteins.

The protein localises to the cell membrane. Its subcellular location is the membrane raft. Functionally, integrin ITGAL/ITGB2 is a receptor for ICAM1, ICAM2, ICAM3 and ICAM4. Integrin ITGAL/ITGB2 is also a receptor for the secreted form of ubiquitin-like protein ISG15; the interaction is mediated by ITGAL. Integrins ITGAM/ITGB2 and ITGAX/ITGB2 are receptors for the iC3b fragment of the third complement component and for fibrinogen. Integrin ITGAX/ITGB2 recognizes the sequence G-P-R in fibrinogen alpha-chain. Integrin ITGAM/ITGB2 recognizes P1 and P2 peptides of fibrinogen gamma chain. Integrin ITGAM/ITGB2 is also a receptor for factor X. Integrin ITGAD/ITGB2 is a receptor for ICAM3 and VCAM1. Contributes to natural killer cell cytotoxicity. Involved in leukocyte adhesion and transmigration of leukocytes including T-cells and neutrophils. Triggers neutrophil transmigration during lung injury through PTK2B/PYK2-mediated activation. Integrin ITGAL/ITGB2 in association with ICAM3, contributes to apoptotic neutrophil phagocytosis by macrophages. In association with alpha subunit ITGAM/CD11b, required for CD177-PRTN3-mediated activation of TNF primed neutrophils. This Ovis canadensis (Bighorn sheep) protein is Integrin beta-2 (ITGB2).